Reading from the N-terminus, the 505-residue chain is tRNA-2-methylthio-N(6)-dimethylallyladenosine synthase (505 aa).

The 119-residue stretch at 14 to 132 (RTYEVRTYGC…LPVLLERARV (119 aa)) folds into the MTTase N-terminal domain. Residues C23, C61, C95, C169, C173, and C176 each coordinate [4Fe-4S] cluster. Residues 155 to 386 (RESAYAAWVS…ALQEEISWDE (232 aa)) enclose the Radical SAM core domain. Residues 388–456 (KKQVGRTLEL…PHHLLAEGAV (69 aa)) enclose the TRAM domain.

The protein belongs to the methylthiotransferase family. MiaB subfamily. As to quaternary structure, monomer. It depends on [4Fe-4S] cluster as a cofactor.

It is found in the cytoplasm. The catalysed reaction is N(6)-dimethylallyladenosine(37) in tRNA + (sulfur carrier)-SH + AH2 + 2 S-adenosyl-L-methionine = 2-methylsulfanyl-N(6)-dimethylallyladenosine(37) in tRNA + (sulfur carrier)-H + 5'-deoxyadenosine + L-methionine + A + S-adenosyl-L-homocysteine + 2 H(+). Functionally, catalyzes the methylthiolation of N6-(dimethylallyl)adenosine (i(6)A), leading to the formation of 2-methylthio-N6-(dimethylallyl)adenosine (ms(2)i(6)A) at position 37 in tRNAs that read codons beginning with uridine. The sequence is that of tRNA-2-methylthio-N(6)-dimethylallyladenosine synthase from Streptomyces coelicolor (strain ATCC BAA-471 / A3(2) / M145).